Consider the following 639-residue polypeptide: Muscarinic acetylcholine receptor M3 (639 aa).

Residues 1-115 lie on the Extracellular side of the membrane; sequence MLTHYQLCFQ…DPLGGHAVWQ (115 aa). N-linked (GlcNAc...) asparagine glycosylation is found at Asn-16, Asn-44, Asn-45, Asn-54, Asn-97, and Asn-101. The chain crosses the membrane as a helical span at residues 116–139; that stretch reads VVLIAFLTGIIALVTIIGNILVIV. At 140–152 the chain is on the cytoplasmic side; sequence SFKVNKQLKTVNN. The chain crosses the membrane as a helical span at residues 153–173; sequence YFLLSLACADLIIGVISMNLF. Residues 174–190 lie on the Extracellular side of the membrane; the sequence is TTYIIMGHWALGNLACD. The cysteines at positions 189 and 269 are disulfide-linked. Residues 191–212 traverse the membrane as a helical segment; the sequence is LWLSIDYVASNASVMNLLVISF. Topologically, residues 213 to 232 are cytoplasmic; the sequence is DRYFSITRPLTYRAKRTTKR. The helical transmembrane segment at 233–255 threads the bilayer; sequence AGVMIGLAWIISFVLWAPAILFW. Residues 256–277 lie on the Extracellular side of the membrane; sequence QYFVGKRTVPLDECFIQFLSEP. A helical transmembrane segment spans residues 278–300; that stretch reads IITFGTAIAAFYLPVTIMSILYW. Topologically, residues 301 to 542 are cytoplasmic; it reads RIYKETEKRT…LIKEKKAAQT (242 aa). Disordered regions lie at residues 370–404 and 431–471; these read PNTDQGDQEHSSSDSWNNNDAAASLENSASSDEED and LPSS…GGSF. The span at 382–393 shows a compositional bias: low complexity; it reads SDSWNNNDAAAS. Basic and acidic residues predominate over residues 443–454; sequence ELQKSDTDSQEK. The helical transmembrane segment at 543–563 threads the bilayer; it reads LSAILFAFIITWTPYNIMVLV. Residues 564–576 lie on the Extracellular side of the membrane; the sequence is NTFCDCVPKTVWN. The chain crosses the membrane as a helical span at residues 577 to 596; the sequence is LGYWLCYINSTVNPVCYALC. At 597–639 the chain is on the cytoplasmic side; the sequence is NKMFRNTFKMLLLCQCDKRKRRKQQYQQRQSVIFHKRIPREAS.

Belongs to the G-protein coupled receptor 1 family. Muscarinic acetylcholine receptor subfamily. CHRM3 sub-subfamily. Brain, heart atria, and ventricle.

Its subcellular location is the cell membrane. It localises to the postsynaptic cell membrane. Functionally, the muscarinic acetylcholine receptor mediates various cellular responses, including inhibition of adenylate cyclase, breakdown of phosphoinositides and modulation of potassium channels through the action of G proteins. Primary transducing effect is Pi turnover. The protein is Muscarinic acetylcholine receptor M3 (CHRM3) of Gallus gallus (Chicken).